Consider the following 975-residue polypeptide: Glycine dehydrogenase (decarboxylating) (975 aa).

The residue at position 723 (Lys-723) is an N6-(pyridoxal phosphate)lysine.

It belongs to the GcvP family. The glycine cleavage system is composed of four proteins: P, T, L and H. Pyridoxal 5'-phosphate is required as a cofactor.

It catalyses the reaction N(6)-[(R)-lipoyl]-L-lysyl-[glycine-cleavage complex H protein] + glycine + H(+) = N(6)-[(R)-S(8)-aminomethyldihydrolipoyl]-L-lysyl-[glycine-cleavage complex H protein] + CO2. Functionally, the glycine cleavage system catalyzes the degradation of glycine. The P protein binds the alpha-amino group of glycine through its pyridoxal phosphate cofactor; CO(2) is released and the remaining methylamine moiety is then transferred to the lipoamide cofactor of the H protein. This Burkholderia mallei (strain NCTC 10247) protein is Glycine dehydrogenase (decarboxylating).